A 214-amino-acid chain; its full sequence is Adenylate kinase (214 aa).

Residue 10 to 15 (GAGKGT) coordinates ATP. Residues 30 to 59 (STGDMFRDHKARGTEIGKQVQAIMDGGGLV) form an NMP region. Residues T31, R36, 57 to 59 (GLV), 85 to 88 (GYPR), and Q92 each bind AMP. Residues 126 to 163 (GRRSCPRCGAVYHVSQNPPRRAGYCDRDDAELVQREDD) form an LID region. R127 serves as a coordination point for ATP. Zn(2+)-binding residues include C130 and C133. ATP is bound at residue 136 to 137 (VY). Zn(2+) contacts are provided by C150 and D153. 2 residues coordinate AMP: R160 and R171. Position 199 (G199) interacts with ATP.

It belongs to the adenylate kinase family. In terms of assembly, monomer.

The protein localises to the cytoplasm. The catalysed reaction is AMP + ATP = 2 ADP. It functions in the pathway purine metabolism; AMP biosynthesis via salvage pathway; AMP from ADP: step 1/1. Catalyzes the reversible transfer of the terminal phosphate group between ATP and AMP. Plays an important role in cellular energy homeostasis and in adenine nucleotide metabolism. This Anaeromyxobacter dehalogenans (strain 2CP-C) protein is Adenylate kinase.